The following is a 505-amino-acid chain: Deoxyguanosinetriphosphate triphosphohydrolase (505 aa).

The 208-residue stretch at arginine 66–cysteine 273 folds into the HD domain.

It belongs to the dGTPase family. Type 1 subfamily. Homotetramer. It depends on Mg(2+) as a cofactor.

The catalysed reaction is dGTP + H2O = 2'-deoxyguanosine + triphosphate + H(+). DGTPase preferentially hydrolyzes dGTP over the other canonical NTPs. The polypeptide is Deoxyguanosinetriphosphate triphosphohydrolase (Escherichia coli O17:K52:H18 (strain UMN026 / ExPEC)).